A 283-amino-acid chain; its full sequence is Polyamine aminopropyltransferase (283 aa).

Residues 5–238 form the PABS domain; that stretch reads QTWIDEYHKG…GIWSWTFASS (234 aa). Residue Gln32 coordinates S-methyl-5'-thioadenosine. Spermidine contacts are provided by His63 and Asp87. S-methyl-5'-thioadenosine contacts are provided by residues Glu107 and 139-140; that span reads DG. Asp158 functions as the Proton acceptor in the catalytic mechanism. 158-161 is a spermidine binding site; that stretch reads DCSD.

The protein belongs to the spermidine/spermine synthase family. As to quaternary structure, homodimer or homotetramer.

The protein resides in the cytoplasm. It carries out the reaction S-adenosyl 3-(methylsulfanyl)propylamine + putrescine = S-methyl-5'-thioadenosine + spermidine + H(+). The protein operates within amine and polyamine biosynthesis; spermidine biosynthesis; spermidine from putrescine: step 1/1. Its function is as follows. Catalyzes the irreversible transfer of a propylamine group from the amino donor S-adenosylmethioninamine (decarboxy-AdoMet) to putrescine (1,4-diaminobutane) to yield spermidine. This Prochlorococcus marinus (strain MIT 9301) protein is Polyamine aminopropyltransferase.